A 141-amino-acid chain; its full sequence is Hemoglobin subunit alpha-1 (141 aa).

Positions 1–141 (VLSEGNKKAI…VTYQLSSLYR (141 aa)) constitute a Globin domain. H59 is an O2 binding site. H88 contributes to the heme b binding site.

Belongs to the globin family. In terms of assembly, heterotetramer of two alpha chains and two beta chains. In terms of tissue distribution, red blood cells.

Involved in oxygen transport from the lung to the various peripheral tissues. The protein is Hemoglobin subunit alpha-1 of Torpedo marmorata (Marbled electric ray).